Here is a 136-residue protein sequence, read N- to C-terminus: Sec-independent protein translocase protein TatB (136 aa).

Residues methionine 1–glycine 21 traverse the membrane as a helical segment. The tract at residues tyrosine 89–serine 136 is disordered. A compositionally biased stretch (polar residues) spans threonine 99–proline 115. Residues serine 122–serine 136 are compositionally biased toward basic and acidic residues.

It belongs to the TatB family. As to quaternary structure, the Tat system comprises two distinct complexes: a TatABC complex, containing multiple copies of TatA, TatB and TatC subunits, and a separate TatA complex, containing only TatA subunits. Substrates initially bind to the TatABC complex, which probably triggers association of the separate TatA complex to form the active translocon.

Its subcellular location is the cell inner membrane. Functionally, part of the twin-arginine translocation (Tat) system that transports large folded proteins containing a characteristic twin-arginine motif in their signal peptide across membranes. Together with TatC, TatB is part of a receptor directly interacting with Tat signal peptides. TatB may form an oligomeric binding site that transiently accommodates folded Tat precursor proteins before their translocation. The polypeptide is Sec-independent protein translocase protein TatB (Hahella chejuensis (strain KCTC 2396)).